A 347-amino-acid polypeptide reads, in one-letter code: Ribosomal RNA small subunit methyltransferase C (347 aa).

This sequence belongs to the methyltransferase superfamily. RsmC family. As to quaternary structure, monomer.

The protein resides in the cytoplasm. The catalysed reaction is guanosine(1207) in 16S rRNA + S-adenosyl-L-methionine = N(2)-methylguanosine(1207) in 16S rRNA + S-adenosyl-L-homocysteine + H(+). Specifically methylates the guanine in position 1207 of 16S rRNA in the 30S particle. The chain is Ribosomal RNA small subunit methyltransferase C from Yersinia pseudotuberculosis serotype IB (strain PB1/+).